The primary structure comprises 97 residues: HssA/B-like protein 38 (97 aa).

Residues 1-29 (MTLFSSISSISNPMTSSKSSISSFGSGTS) are disordered.

The protein belongs to the hssA/B family.

The protein is HssA/B-like protein 38 (hssl38) of Dictyostelium discoideum (Social amoeba).